Reading from the N-terminus, the 453-residue chain is Serine incorporator 1 (453 aa).

Residue G2 is the site of N-myristoyl glycine attachment. At 2–39 (GSVLGLCSMASWIPCLCGSAPCLLCRCCPSGNNSTVTR) the chain is on the cytoplasmic side. A helical transmembrane segment spans residues 40–60 (LIYALFLLVGVCVACVMLIPG). Residues 61-88 (MEEQLNKIPGFCENEKGVVPCNILVGYK) are Lumenal-facing. Residues 89–109 (AVYRLCFGLAMFYLLLSLLMI) form a helical membrane-spanning segment. Over 110-123 (KVKSSSDPRAAVHN) the chain is Cytoplasmic. Residues 124–144 (GFWFFKFAAAIAIIIGAFFIP) form a helical membrane-spanning segment. At 145-151 (EGTFTTV) the chain is on the lumenal side. A helical membrane pass occupies residues 152 to 172 (WFYVGMAGAFCFILIQLVLLI). Over 173-197 (DFAHSWNESWVEKMEEGNSRCWYAA) the chain is Cytoplasmic. The helical transmembrane segment at 198–218 (LLSATALNYLLSLVAIVLFFV) threads the bilayer. Residues 219-231 (YYTHPASCSENKA) are Lumenal-facing. The helical transmembrane segment at 232-252 (FISVNMLLCIGASVMSILPKI) threads the bilayer. Residues 253 to 259 (QESQPRS) are Cytoplasmic-facing. The chain crosses the membrane as a helical span at residues 260–280 (GLLQSSVITVYTMYLTWSAMT). At 281–309 (NEPETNCNPSLLSIIGYNTTSTVPKEGQS) the chain is on the lumenal side. A helical transmembrane segment spans residues 310–330 (VQWWHAQGIIGLILFLLCVFY). Topologically, residues 331-387 (SSIRTSNNSQVNKLTLTSDESTLIEDGGARSDGSLEDGDDVHRAVDNERDGVTYSYS) are cytoplasmic. S351 bears the Phosphoserine mark. T352 carries the phosphothreonine modification. S361 and S364 each carry phosphoserine. A helical transmembrane segment spans residues 388–408 (FFHFMLFLASLYIMMTLTNWY). Residues 409 to 426 (RYEPSREMKSQWTAVWVK) are Lumenal-facing. Residues 427–447 (ISSSWIGIVLYVWTLVAPLVL) form a helical membrane-spanning segment. Topologically, residues 448-453 (TNRDFD) are cytoplasmic.

The protein belongs to the TDE1 family. As to quaternary structure, interacts with SPTLC1.

It is found in the endoplasmic reticulum membrane. Enhances the incorporation of serine into phosphatidylserine and sphingolipids. The sequence is that of Serine incorporator 1 (SERINC1) from Pongo abelii (Sumatran orangutan).